We begin with the raw amino-acid sequence, 1138 residues long: uncharacterized protein (1138 aa).

Disordered regions lie at residues 985–1015 (EKKL…MAQE) and 1094–1138 (LVAT…QNKL). A compositionally biased stretch (acidic residues) spans 1110 to 1138 (DDDEYEKYDSGIEDIETDVDEEEEVQNKL).

This is an uncharacterized protein from Ostreid herpesvirus 1 (isolate France) (OsHV-1).